The sequence spans 266 residues: MRLIPLNQAEQVGAWSAQHIVNRINEFNPTADRPFVLGLPTGGTPLNTYKKLIELYKADKVSFKNVVTFNMDEYIGLDTNHPESYRTFMFENFFNHVDIQEENINLLNGNTDNHEEECQRYEDKIKSYGRINLFMGGVGNDGHIAFNEPASSLASRTRIKTLTEDTRIANSRFFDGDIAQVPKYALTIGVGTLLDSAEIMILITGHNKALALQAAVEGSVNHMWTVSALQIHPKSVIVCDEASQQELKVKTVKYFKELEAENIKHV.

The active-site Proton acceptor; for enolization step is the Asp72. Asp141 acts as the For ring-opening step in catalysis. Residue His143 is the Proton acceptor; for ring-opening step of the active site. The For ring-opening step role is filled by Glu148.

It belongs to the glucosamine/galactosamine-6-phosphate isomerase family. NagB subfamily. Homohexamer.

It carries out the reaction alpha-D-glucosamine 6-phosphate + H2O = beta-D-fructose 6-phosphate + NH4(+). Its pathway is amino-sugar metabolism; N-acetylneuraminate degradation; D-fructose 6-phosphate from N-acetylneuraminate: step 5/5. With respect to regulation, allosterically activated by N-acetylglucosamine 6-phosphate (GlcNAc6P). In terms of biological role, catalyzes the reversible isomerization-deamination of glucosamine 6-phosphate (GlcN6P) to form fructose 6-phosphate (Fru6P) and ammonium ion. This is Glucosamine-6-phosphate deaminase from Aliivibrio salmonicida (strain LFI1238) (Vibrio salmonicida (strain LFI1238)).